We begin with the raw amino-acid sequence, 563 residues long: Secreted lipase ARB07186/07185 (563 aa).

The N-terminal stretch at 1–20 (MAKYDFVMLWILTLTAAIAA) is a signal peptide. An intrachain disulfide couples cysteine 83 to cysteine 101. The Acyl-ester intermediate role is filled by serine 215. An intrachain disulfide couples cysteine 268 to cysteine 281.

The protein belongs to the type-B carboxylesterase/lipase family.

Its subcellular location is the secreted. It catalyses the reaction a triacylglycerol + H2O = a diacylglycerol + a fatty acid + H(+). This Arthroderma benhamiae (strain ATCC MYA-4681 / CBS 112371) (Trichophyton mentagrophytes) protein is Secreted lipase ARB07186/07185.